The primary structure comprises 490 residues: Betaine aldehyde dehydrogenase (490 aa).

K(+) is bound by residues T26, I27, and D93. 150–152 lines the NAD(+) pocket; the sequence is GAW. Catalysis depends on K162, which acts as the Charge relay system. 176 to 179 is an NAD(+) binding site; that stretch reads KPSE. K(+) is bound at residue V180. 230-233 contacts NAD(+); sequence GTST. L246 contributes to the K(+) binding site. The Proton acceptor role is filled by E252. Residues G254, C286, and E387 each coordinate NAD(+). C286 acts as the Nucleophile in catalysis. C286 carries the post-translational modification Cysteine sulfenic acid (-SOH). K(+) is bound by residues K457 and G460. The active-site Charge relay system is the E464.

It belongs to the aldehyde dehydrogenase family. As to quaternary structure, dimer of dimers. K(+) serves as cofactor.

It catalyses the reaction betaine aldehyde + NAD(+) + H2O = glycine betaine + NADH + 2 H(+). The protein operates within amine and polyamine biosynthesis; betaine biosynthesis via choline pathway; betaine from betaine aldehyde: step 1/1. In terms of biological role, involved in the biosynthesis of the osmoprotectant glycine betaine. Catalyzes the irreversible oxidation of betaine aldehyde to the corresponding acid. This Pseudomonas aeruginosa (strain UCBPP-PA14) protein is Betaine aldehyde dehydrogenase.